We begin with the raw amino-acid sequence, 264 residues long: DNA repair protein RecO (264 aa).

Belongs to the RecO family.

In terms of biological role, involved in DNA repair and RecF pathway recombination. The polypeptide is DNA repair protein RecO (Chlorobium luteolum (strain DSM 273 / BCRC 81028 / 2530) (Pelodictyon luteolum)).